The following is a 438-amino-acid chain: Putative galacturan 1,4-alpha-galacturonidase A (438 aa).

An N-terminal signal peptide occupies residues 1–21 (MRMPSAISIGVFAGLSLAASA). N28, N102, N111, and N197 each carry an N-linked (GlcNAc...) asparagine glycan. PbH1 repeat units follow at residues 186 to 222 (SSHI…DTYR) and 223 to 244 (SDHI…AFKG). The active-site Proton donor is the D237. N245, N253, N279, N325, N353, N372, and N388 each carry an N-linked (GlcNAc...) asparagine glycan. PbH1 repeat units follow at residues 246-266 (STNI…AFGS), 277-303 (VENV…YFKS), and 323-344 (VRNV…YIDT). A disulfide bridge connects residues C397 and C403. N418 is a glycosylation site (N-linked (GlcNAc...) asparagine).

The protein belongs to the glycosyl hydrolase 28 family.

Its subcellular location is the secreted. It carries out the reaction [(1-&gt;4)-alpha-D-galacturonosyl](n) + H2O = alpha-D-galacturonate + [(1-&gt;4)-alpha-D-galacturonosyl](n-1). Its function is as follows. Specific in hydrolyzing the terminal glycosidic bond of polygalacturonic acid and oligogalacturonates. In Aspergillus niger, this protein is Putative galacturan 1,4-alpha-galacturonidase A (rgxA).